We begin with the raw amino-acid sequence, 173 residues long: Regulator of ribonuclease activity A (173 aa).

It belongs to the RraA family. Homotrimer. Binds to both RNA-binding sites in the C-terminal region of Rne and to RhlB.

The protein resides in the cytoplasm. Globally modulates RNA abundance by binding to RNase E (Rne) and regulating its endonucleolytic activity. Can modulate Rne action in a substrate-dependent manner by altering the composition of the degradosome. Modulates RNA-binding and helicase activities of the degradosome. The chain is Regulator of ribonuclease activity A from Vibrio vulnificus (strain YJ016).